A 232-amino-acid chain; its full sequence is Ribose-5-phosphate isomerase A (232 aa).

Residues 31–34 (TGST), 87–90 (DGAD), and 100–103 (KGGG) contribute to the substrate site. The active-site Proton acceptor is Glu-109. Lys-127 is a substrate binding site.

This sequence belongs to the ribose 5-phosphate isomerase family. In terms of assembly, homodimer.

The catalysed reaction is aldehydo-D-ribose 5-phosphate = D-ribulose 5-phosphate. Its pathway is carbohydrate degradation; pentose phosphate pathway; D-ribose 5-phosphate from D-ribulose 5-phosphate (non-oxidative stage): step 1/1. Functionally, catalyzes the reversible conversion of ribose-5-phosphate to ribulose 5-phosphate. This is Ribose-5-phosphate isomerase A from Bifidobacterium longum (strain DJO10A).